The sequence spans 216 residues: Transmembrane emp24 domain-containing protein eca (216 aa).

Positions 1 to 20 are cleaved as a signal peptide; the sequence is MRDQWICLALVLCALHSACG. Over 21–183 the chain is Lumenal; that stretch reads LYFHISETER…RHTSESTNSR (163 aa). The region spanning 30–126 is the GOLD domain; the sequence is RKCFIEEVPD…QLRVHLDIQV (97 aa). A coiled-coil region spans residues 134-164; that stretch reads ANVAQKEKLTELQLRIRQLLDQVEQITKEQN. The helical transmembrane segment at 184–203 threads the bilayer; sequence VLWWSLAQTVVLVCMGFWQM. The Cytoplasmic segment spans residues 204 to 216; it reads RHLKSFFEAKKLV. The Prevents secretion from ER signature appears at 213–216; it reads KKLV.

The protein belongs to the EMP24/GP25L family.

Its subcellular location is the endoplasmic reticulum membrane. Eca and bai are essential, though not redundant, for dorsoventral patterning of the embryo. Specifically required during early embryogenesis for the activity of maternal tkv, while the zygotic tkv is not affected. This is Transmembrane emp24 domain-containing protein eca from Drosophila mojavensis (Fruit fly).